A 114-amino-acid polypeptide reads, in one-letter code: Iron-sulfur cluster insertion protein ErpA (114 aa).

3 residues coordinate iron-sulfur cluster: Cys42, Cys106, and Cys108.

This sequence belongs to the HesB/IscA family. Homodimer. The cofactor is iron-sulfur cluster.

Functionally, required for insertion of 4Fe-4S clusters for at least IspG. The sequence is that of Iron-sulfur cluster insertion protein ErpA from Haemophilus influenzae (strain PittGG).